The primary structure comprises 331 residues: 6-phosphogluconolactonase (331 aa).

It belongs to the cycloisomerase 2 family.

It catalyses the reaction 6-phospho-D-glucono-1,5-lactone + H2O = 6-phospho-D-gluconate + H(+). The protein operates within carbohydrate degradation; pentose phosphate pathway; D-ribulose 5-phosphate from D-glucose 6-phosphate (oxidative stage): step 2/3. Catalyzes the hydrolysis of 6-phosphogluconolactone to 6-phosphogluconate. The sequence is that of 6-phosphogluconolactonase from Sodalis glossinidius (strain morsitans).